The following is an 800-amino-acid chain: MLISNEWLKDYVNVDQSVQALAERITRTGIEVDDIIDYTKDIKKLVVGHVLSKTPHPNADKLNICQVDLGEEEPVQIVCGAPNVDEGQHVIVAKVGGRLPGGIKIKRAKLRGERSEGMICSLQEIGISSHVTPKNYESGIYVFPEAVKPGTDALEAIYLNDQVMEFDLTPNRADALSMVGTAYEVAALYQTKMNKPQLTSNESQESAKDELTIEVKNEDKVPYYSTRVVHDVTIGPSPVWMQFRLIKAGIRPINNVVDISNYVLLEYGQPLHMFDQEQIGSQSIEVRQAKKDETMRTLDGEERRLLDTDIVITNGKDPIALGGVMGGDFSEVTEQTRHVVVEGAIFDPVSIRHTSRRLNLRSESSSRFEKGIATEFVDEAVDRACYLLERYASGTVLKDRVSHGDLGSFVTPIEITADKVNRTIGFNLTDEEIIDIFEQLGFDTENKNGEITVNVPSRRKDISIKEDLIEEVARIYGYDEIPSTLPVFKDVTSGELTDRQFKTRTVKETLEGAGLDQAITYSLVSKNHATDFALQNRPTIELLMPMSEAHSTLRQSLLPHLIDAVSYNVARKNTNVKLYEIGRVFFGNGEGELPDEVEYLSGILTGDFVNNTWQGKKESVDFYLTKGVVERIAEKLNLQFDFRAGQIDGLHPGRTAIVSLNGKDIGFIGELHPTLAANNDLKRTYVFELNYDAMMEVSVGYINYEPIPRFPGVTRDIALEVNHEVTSSELLSIIHENGEDILNDTLVFDVYEGEHLEKGKKSIAIRLSYLDTENTLTDERVNAVHDKILEALKKHGAIIR.

The tRNA-binding domain maps to threonine 39 to leucine 154. One can recognise a B5 domain in the interval serine 408–serine 483. Positions 461, 467, 470, and 471 each coordinate Mg(2+). The region spanning proline 708–arginine 800 is the FDX-ACB domain.

It belongs to the phenylalanyl-tRNA synthetase beta subunit family. Type 1 subfamily. In terms of assembly, tetramer of two alpha and two beta subunits. It depends on Mg(2+) as a cofactor.

The protein localises to the cytoplasm. It catalyses the reaction tRNA(Phe) + L-phenylalanine + ATP = L-phenylalanyl-tRNA(Phe) + AMP + diphosphate + H(+). The protein is Phenylalanine--tRNA ligase beta subunit of Staphylococcus epidermidis (strain ATCC 12228 / FDA PCI 1200).